Reading from the N-terminus, the 126-residue chain is MANKQVEISMAEWDVMNIIWGKKSVSANEIVVEIQKYKEVSDKTIRTLITRLYKKEIIKRYKSENIYFYSSNIKEDDIKMKTAKTFLNKLYGGDMKSLVLNFAKNEELNNKEIEELRDILNDISKK.

The H-T-H motif DNA-binding region spans 7–71 (EISMAEWDVM…KSENIYFYSS (65 aa)). The tract at residues 74–126 (KEDDIKMKTAKTFLNKLYGGDMKSLVLNFAKNEELNNKEIEELRDILNDISKK) is important for dimerization.

This sequence belongs to the BlaI transcriptional regulatory family. In terms of assembly, homodimer. In terms of processing, upon exposure to beta-lactams, the protease BlaR1 is activated and cleaves BlaI at a single site. This proteolytic cleavage impairs dimerization and abolishes repressor activity.

The protein localises to the cytoplasm. In terms of biological role, transcriptional repressor that constitutively blocks expression of beta-lactamase. Binds DNA as a dimer. The chain is Penicillinase repressor (blaI) from Staphylococcus aureus.